We begin with the raw amino-acid sequence, 521 residues long: (+)-kolavenyl diphosphate synthase (521 aa).

2 residues coordinate Mg(2+): aspartate 311 and aspartate 313. Residues 311–314 carry the DXDD motif motif; the sequence is DGDD.

The protein belongs to the terpene synthase family. Requires Mg(2+) as cofactor.

The enzyme catalyses (2E,6E,10E)-geranylgeranyl diphosphate = (+)-kolavenyl diphosphate. Functionally, involved in the biosynthesis of (+)-O-methylkolavelool. Catalyzes the conversion of geranylgeranyl diphosphate into (+)-kolavenyl diphosphate. The sequence is that of (+)-kolavenyl diphosphate synthase from Herpetosiphon aurantiacus (strain ATCC 23779 / DSM 785 / 114-95).